Reading from the N-terminus, the 270-residue chain is Putative pyruvate, phosphate dikinase regulatory protein (270 aa).

151–158 contributes to the ADP binding site; it reads GVSRTSKT.

The protein belongs to the pyruvate, phosphate/water dikinase regulatory protein family. PDRP subfamily.

It catalyses the reaction N(tele)-phospho-L-histidyl/L-threonyl-[pyruvate, phosphate dikinase] + ADP = N(tele)-phospho-L-histidyl/O-phospho-L-threonyl-[pyruvate, phosphate dikinase] + AMP + H(+). The enzyme catalyses N(tele)-phospho-L-histidyl/O-phospho-L-threonyl-[pyruvate, phosphate dikinase] + phosphate + H(+) = N(tele)-phospho-L-histidyl/L-threonyl-[pyruvate, phosphate dikinase] + diphosphate. Bifunctional serine/threonine kinase and phosphorylase involved in the regulation of the pyruvate, phosphate dikinase (PPDK) by catalyzing its phosphorylation/dephosphorylation. This chain is Putative pyruvate, phosphate dikinase regulatory protein, found in Streptococcus gordonii (strain Challis / ATCC 35105 / BCRC 15272 / CH1 / DL1 / V288).